A 501-amino-acid chain; its full sequence is Probable pectate lyase 13 (501 aa).

Residues 1-22 (MLLQNFSNTIFLLCLFFTLLSA) form the signal peptide. Residues Asn27 and Asn49 are each glycosylated (N-linked (GlcNAc...) asparagine). Positions 55 to 78 (RQLSSPSSSSSSSSSSSSSSCRTG) are disordered. A compositionally biased stretch (low complexity) spans 58–74 (SSPSSSSSSSSSSSSSS). Residues Asp217, Asp241, and Asp245 each coordinate Ca(2+). Arg297 is an active-site residue. Disordered regions lie at residues 329–359 (INSQGNRYSAPSDPSAKEVTKRVDSKDDGEW) and 408–463 (NAGV…SSGD). The span at 343-357 (SAKEVTKRVDSKDDG) shows a compositional bias: basic and acidic residues. The span at 430–449 (GGDGGGGGSSGGSSGGGMDV) shows a compositional bias: gly residues. The span at 450-463 (MGGTTRGSSSSSGD) shows a compositional bias: low complexity. Ser474 is lipidated: GPI-anchor amidated serine. Residues 475-501 (DAPSRPRLTLLFSLLMISVLSLSTLLL) constitute a propeptide, removed in mature form.

It belongs to the polysaccharide lyase 1 family. Ca(2+) serves as cofactor. As to expression, expressed equally in mature leaves, buds, flowers, rosettes and roots.

The protein resides in the cell membrane. The catalysed reaction is Eliminative cleavage of (1-&gt;4)-alpha-D-galacturonan to give oligosaccharides with 4-deoxy-alpha-D-galact-4-enuronosyl groups at their non-reducing ends.. It participates in glycan metabolism; pectin degradation; 2-dehydro-3-deoxy-D-gluconate from pectin: step 2/5. In terms of biological role, susceptibility factor required for infection by most powdery mildews, but not by unrelated pathogens. Exact function not known, but clearly affects cell wall composition. This is Probable pectate lyase 13 (PMR6) from Arabidopsis thaliana (Mouse-ear cress).